The primary structure comprises 307 residues: Thymidylate synthase (307 aa).

DUMP-binding positions include Arg26 and 160-161 (RR). Catalysis depends on Cys180, which acts as the Nucleophile. DUMP-binding positions include 209–212 (RSCD), Asn220, and 250–252 (HIY). A (6R)-5,10-methylene-5,6,7,8-tetrahydrofolate-binding site is contributed by Asp212. Ala306 contacts (6R)-5,10-methylene-5,6,7,8-tetrahydrofolate.

The protein belongs to the thymidylate synthase family. Bacterial-type ThyA subfamily. In terms of assembly, homodimer.

Its subcellular location is the cytoplasm. It carries out the reaction dUMP + (6R)-5,10-methylene-5,6,7,8-tetrahydrofolate = 7,8-dihydrofolate + dTMP. It participates in pyrimidine metabolism; dTTP biosynthesis. Functionally, catalyzes the reductive methylation of 2'-deoxyuridine-5'-monophosphate (dUMP) to 2'-deoxythymidine-5'-monophosphate (dTMP) while utilizing 5,10-methylenetetrahydrofolate (mTHF) as the methyl donor and reductant in the reaction, yielding dihydrofolate (DHF) as a by-product. This enzymatic reaction provides an intracellular de novo source of dTMP, an essential precursor for DNA biosynthesis. The chain is Thymidylate synthase from Rhizobium rhizogenes (strain K84 / ATCC BAA-868) (Agrobacterium radiobacter).